The chain runs to 535 residues: GMP synthase [glutamine-hydrolyzing] (535 aa).

Residues 20–210 enclose the Glutamine amidotransferase type-1 domain; sequence PVLVVDFGAQ…LHRCAALPND (191 aa). Residue Cys97 is the Nucleophile of the active site. Residues His184 and Glu186 contribute to the active site. A GMPS ATP-PPase domain is found at 211–409; it reads WDASSIIEDQ…LGLPDEIVWR (199 aa). Position 238 to 244 (238 to 244) interacts with ATP; sequence SGGVDSA.

As to quaternary structure, homodimer.

The enzyme catalyses XMP + L-glutamine + ATP + H2O = GMP + L-glutamate + AMP + diphosphate + 2 H(+). The protein operates within purine metabolism; GMP biosynthesis; GMP from XMP (L-Gln route): step 1/1. Functionally, catalyzes the synthesis of GMP from XMP. This Bifidobacterium longum (strain NCC 2705) protein is GMP synthase [glutamine-hydrolyzing].